Consider the following 120-residue polypeptide: Anti-adapter protein IraM (120 aa).

Belongs to the IraM/RssC family.

It is found in the cytoplasm. Its function is as follows. Involved in the stabilization of the sigma stress factor RpoS. This chain is Anti-adapter protein IraM, found in Salmonella typhimurium (strain LT2 / SGSC1412 / ATCC 700720).